Reading from the N-terminus, the 668-residue chain is Small ribosomal subunit protein mS81 (rPPR8) (668 aa).

The N-terminal 36 residues, 1 to 36, are a transit peptide targeting the mitochondrion; the sequence is MRYQQWRLMLLRSYHRSHLPYLSPCSQVTSISSRSF. 7 PPR repeats span residues 286–320, 321–355, 396–430, 431–465, 466–496, 502–537, and 543–577; these read DEKT…GYEV, EIET…SSSS, TDSL…GYVP, SGDM…GNNL, DDKA…MVGN, ADYS…QLKP, and KSLV…GFPP.

It belongs to the PPR family. P subfamily. Component of the mitochondrial ribosome small subunit.

It is found in the mitochondrion. This chain is Small ribosomal subunit protein mS81 (rPPR8), found in Arabidopsis thaliana (Mouse-ear cress).